Consider the following 308-residue polypeptide: D-alanine--D-alanine ligase (308 aa).

The region spanning 102–302 is the ATP-grasp domain; the sequence is KKVAAAAGVA…FGELLSWMVE (201 aa). 128–183 is an ATP binding site; it reads PMEPPYVVKPVREGSSFGVVIVKEDQTHPPQIISSAEWNYGAEVLVEKYIPGRELT. Asp252, Glu269, and Asn271 together coordinate Mg(2+).

Belongs to the D-alanine--D-alanine ligase family. It depends on Mg(2+) as a cofactor. Requires Mn(2+) as cofactor.

It is found in the cytoplasm. The enzyme catalyses 2 D-alanine + ATP = D-alanyl-D-alanine + ADP + phosphate + H(+). It participates in cell wall biogenesis; peptidoglycan biosynthesis. Functionally, cell wall formation. The protein is D-alanine--D-alanine ligase of Brucella anthropi (strain ATCC 49188 / DSM 6882 / CCUG 24695 / JCM 21032 / LMG 3331 / NBRC 15819 / NCTC 12168 / Alc 37) (Ochrobactrum anthropi).